The chain runs to 1510 residues: MSDVFELENEIELESDEVILENENVEEIVDAPIPFSMTTNNGIERGKFRSLTLINWNGFFARTFDLDELVTTLSGGNGAGKSTTMAGFVTALIPDLTLLHFRNTTEAGSTGGSRDKGLHGKLRPGVCYAVLDTINSRHQRILVGVRLQQIAGRDKKVDLKTFSIQGVELSQNPTALFTETVGEHQARVLNLNELKDKIENIGAQFKQYHSITDYHGMMFDLGIIPKRLRSASDRSKFYKLIEASLYGGISSAITRSLRDYLLPENLGVRKAFQDMESALRENRMTLEAIKVTQSDRDLFKHLITETTNYVASDYMRNANERRGNIEAALESRREWYKAKAEQNLSQHRLVDLSREVAELAESERTLEVDHQSAVDHLNLVLNALRHQEKITRYQEDIAELTERLEEQKMVVEDANDALEESQAQFEQTEIEIDAVRSQLADYQQALDAQQTRALQYQQAIAALEKAKTLCGLADLSVKNVEDYHAEFDAHAESLTETVLELEHKMSISEAAKSQFDKAYQLVCKIAGEMPRSTAWESAKELLREYPSQKLQAQQTPQLRTKLHELEQRYAQQQSAVKLLNDFNQRANLSLQTAEELEDYHAEQEALIEDISARLSEQVENRSTLRQKRENLTALYDENARKAPAWLTAQAALERLEQQSGERFEHSQDVMNFMQSQLVKERELTMQRDQLEQKRLHLDEQISRLSQPDGSEDPRLNMLAERFGGVLLSELYDDVTIEDAPYFSALYGPSRHAIVVRDLNAVREQLAQLEDCPDDLYLIEGDPTAFDDSVLSAQELELGVVVQVSDRELRYSRFPEIPLFGCAAREKRLEELQIERDEVAEQHAQIAFDVQKCQRLHEHFSQFVGLHLALAFQPNPEALMSEINRERNEIDRELNQFNSGEQQLRIQLDNAKERLQLLNKLIPQLNVLADEDLIDRIEECREQLDIAEQDEYFIRQHGVTLSQLEPIANSLQSDPENYEGLKNELTQAIERQKQVQQRVFALADVVQRKPHFGYEDAGQAETSELNEKLRQRLEQMQAQRDTQREQVRQKQSQFAEYNRVLIQLQSSYDSKYQLLNELIGEISDLGVRADDGAEERARIRRDELHQQLSTSRQRRSYVEKQLTLIESEADNLNRLIRKTERDYKTQRELVVAAKVSWCVVLRLSRNSDMEKRLNRRELAYLSADELRSMSDKALGALRTAVADNEYLRDSLRVSEDSRKPENKVRFFIAVYQHLRERIRQDIIKTDDPIDAIEQMEIELSRLTAELTGREKKLAISSESVANIMRKTIQREQNRIRMLNQGLQNIAFGQVKSVRLVVNIRDTHAMLLDALSGQQDEYQDLFNDNRITFSEAMAKLYQRINPHIDMGQRTAQTIGEELLDYRNYLELEVEVFRGADGWLRAESGALSTGEAIGTGMSILLMVVQSWEEESRRIRGKDIVPCRLLFLDEAARLDGKSISTLFELCERLDMQLLIAAPENISPEKGTTYKLVRKIAGNQEYVHVVGLRGFGATE.

Glycine 75–serine 82 contributes to the ATP binding site. Positions glutamine 346–glutamine 706 form a coiled coil. Residues proline 707–arginine 824 are flexible hinge. Coiled coils occupy residues glutamate 825–valine 1154 and isoleucine 1248–isoleucine 1304.

This sequence belongs to the SMC family. MukB subfamily. In terms of assembly, homodimerization via its hinge domain. Binds to DNA via its C-terminal region. Interacts, and probably forms a ternary complex, with MukE and MukF via its C-terminal region. The complex formation is stimulated by calcium or magnesium. Interacts with tubulin-related protein FtsZ.

The protein localises to the cytoplasm. Its subcellular location is the nucleoid. Functionally, plays a central role in chromosome condensation, segregation and cell cycle progression. Functions as a homodimer, which is essential for chromosome partition. Involved in negative DNA supercoiling in vivo, and by this means organize and compact chromosomes. May achieve or facilitate chromosome segregation by condensation DNA from both sides of a centrally located replisome during cell division. The chain is Chromosome partition protein MukB from Haemophilus influenzae (strain ATCC 51907 / DSM 11121 / KW20 / Rd).